A 654-amino-acid chain; its full sequence is MTSMDIPYSQISSFVNSSFFQKVSQLKLNKYRLDDTDKAIVGSVDFKFIGKNQPTSLSVDESSFNDNITYTHAQFPVKGILKNLNTVEDFRKVDKNEFLQSQGLVVHKSIQDRSCLKDLSKLTQFFILSFSDLKGFKFIYWFGFPSLVSRWKVNKLSGLTESQIEPYESKLNEWLNARLPIEQKQAFIIDNLEFKPFEQLSSFSPDDQLNIGFIDTSSILNKCSTQLRNILYMLAYYGFENIKVYNFRFNNTTSFTLDITLAEPLTSEPKTTGWERTAQGKLGPKLADIGALVDPARLADQSVDLNLKLMKWRVMPELDLDIIKNSKVLLLGAGTLGSYVSRVLLGYGVRHITFVDNGKVSFSNPVRQPLFNFTDCLEGGAPKAETAAKALKLIFPLITSQGYNLEVPMAGHPVTDEKRQYEDYQRLVTLIKEHDVVFLLMDSRETRWLPTVLCNVFDKICITAALGFDSYLVMRHGNLFNTEHIEAEENSHRLGCYFCNDIIAPKDSTTDRTLDQMCTVTRPGVALLASSLAAELFVSILQHPLKSHAPASLHDNATVLGCLPQQLRGFLHNFETSKLEANNYEYCSACSIQVLNEYKSRTWDFVKDALNENNYLEDLTGLTKVKQESEIAEKKFQEFENGLEFSDEDSEWIN.

The short motif at 332 to 337 (GAGTLG) is the GXGXXG motif element. Cys518 acts as the Glycyl thioester intermediate in catalysis. A homodimerization region spans residues 615–654 (YLEDLTGLTKVKQESEIAEKKFQEFENGLEFSDEDSEWIN).

It belongs to the ATG7 family. As to quaternary structure, homodimer. Interacts with ATG8 through a thioester bond between Cys-518 and the C-terminal 'Gly-116' of ATG8.

It localises to the cytoplasm. Its subcellular location is the preautophagosomal structure. In terms of biological role, E1-like activating enzyme involved in the 2 ubiquitin-like systems required for cytoplasm to vacuole transport (Cvt) and autophagy. Activates ATG12 for its conjugation with ATG5 and ATG8 for its conjugation with phosphatidylethanolamine. Both systems are needed for the ATG8 association to Cvt vesicles and autophagosomes membranes. Autophagy is essential for maintenance of amino acid levels and protein synthesis under nitrogen starvation. Required for selective autophagic degradation of the nucleus (nucleophagy) as well as for mitophagy which contributes to regulate mitochondrial quantity and quality by eliminating the mitochondria to a basal level to fulfill cellular energy requirements and preventing excess ROS production. Plays a role in the regulation of filamentous growth and chronological longevity. Involved in glucose-induced micropexophagy. The polypeptide is Ubiquitin-like modifier-activating enzyme ATG7 (ATG7) (Komagataella pastoris (Yeast)).